A 473-amino-acid polypeptide reads, in one-letter code: Cysteine--tRNA ligase (473 aa).

Residue Cys28 coordinates Zn(2+). The short motif at 30–40 is the 'HIGH' region element; it reads MTVYDFCHIGH. Zn(2+) contacts are provided by Cys212, His237, and Glu241. Positions 277 to 281 match the 'KMSKS' region motif; that stretch reads KMSKS. Lys280 serves as a coordination point for ATP.

It belongs to the class-I aminoacyl-tRNA synthetase family. Monomer. Requires Zn(2+) as cofactor.

Its subcellular location is the cytoplasm. It carries out the reaction tRNA(Cys) + L-cysteine + ATP = L-cysteinyl-tRNA(Cys) + AMP + diphosphate. This Polynucleobacter asymbioticus (strain DSM 18221 / CIP 109841 / QLW-P1DMWA-1) (Polynucleobacter necessarius subsp. asymbioticus) protein is Cysteine--tRNA ligase.